The chain runs to 363 residues: Membrane-bound lytic murein transglycosylase C (363 aa).

A signal peptide spans 1 to 15 (MKKYIVFAIIPFLFA). A lipid anchor (N-palmitoyl cysteine) is attached at C16. The S-diacylglycerol cysteine moiety is linked to residue C16.

It belongs to the transglycosylase Slt family.

It localises to the cell outer membrane. It carries out the reaction Exolytic cleavage of the (1-&gt;4)-beta-glycosidic linkage between N-acetylmuramic acid (MurNAc) and N-acetylglucosamine (GlcNAc) residues in peptidoglycan, from either the reducing or the non-reducing ends of the peptidoglycan chains, with concomitant formation of a 1,6-anhydrobond in the MurNAc residue.. Functionally, murein-degrading enzyme. May play a role in recycling of muropeptides during cell elongation and/or cell division. The polypeptide is Membrane-bound lytic murein transglycosylase C (Histophilus somni (strain 129Pt) (Haemophilus somnus)).